The sequence spans 440 residues: MRLSRYFMPILKENPKEAEIVSHRLMLRAGMIRQQSQGIYSWLPLGKRVLDKVNAIIRDEQNRAGAIELSMPTLQSAELWQESGRYDAYGKEMLRIKDRQDRPMLYGPTNEEMVTDIFRSSVKSYKDLPLNLYHIQLKFRDEIRPRFGTMRSREFMMKDAYSFDLTREGAEHSYNKMFAAYLRTFDRLGLRAIPMRADTGPIGGNLSHEFIILADTGESEVFCHKDFVGFDIPDDRTDFDSVDGLKAIFDKWTSLYAATSEMHDEAAFNAVPEGDRLSARGIEVGHIFYFGTKYSEAMGAKVQGPDGKEHFVHMGSYGIGPTRLVPAIIEASHDDNGIIWPASVAPFDIVVINMKAGDQACDDTCELIYAALTKAGKDVLYDDTDDRAGTKFATADLIGVPFQIIAGPRAVANGEVEVKDRKTGARETMTIEAAINRFVA.

This sequence belongs to the class-II aminoacyl-tRNA synthetase family. ProS type 2 subfamily. Homodimer.

It localises to the cytoplasm. The catalysed reaction is tRNA(Pro) + L-proline + ATP = L-prolyl-tRNA(Pro) + AMP + diphosphate. In terms of biological role, catalyzes the attachment of proline to tRNA(Pro) in a two-step reaction: proline is first activated by ATP to form Pro-AMP and then transferred to the acceptor end of tRNA(Pro). The protein is Proline--tRNA ligase of Rhizobium leguminosarum bv. trifolii (strain WSM2304).